The following is a 122-amino-acid chain: Large ribosomal subunit protein uL14 (122 aa).

Belongs to the universal ribosomal protein uL14 family. Part of the 50S ribosomal subunit. Forms a cluster with proteins L3 and L19. In the 70S ribosome, L14 and L19 interact and together make contacts with the 16S rRNA in bridges B5 and B8.

In terms of biological role, binds to 23S rRNA. Forms part of two intersubunit bridges in the 70S ribosome. This Acidothermus cellulolyticus (strain ATCC 43068 / DSM 8971 / 11B) protein is Large ribosomal subunit protein uL14.